The following is a 238-amino-acid chain: ATP synthase subunit a (238 aa).

The next 5 helical transmembrane spans lie at 17-37, 75-95, 112-132, 179-199, and 202-222; these read LSDM…AVAA, FLTL…LGLP, DATV…YYGV, ILLG…AVGA, and FPIM…AFIF.

Belongs to the ATPase A chain family. As to quaternary structure, F-type ATPases have 2 components, CF(1) - the catalytic core - and CF(0) - the membrane proton channel. CF(1) has five subunits: alpha(3), beta(3), gamma(1), delta(1), epsilon(1). CF(0) has three main subunits: a(1), b(2) and c(9-12). The alpha and beta chains form an alternating ring which encloses part of the gamma chain. CF(1) is attached to CF(0) by a central stalk formed by the gamma and epsilon chains, while a peripheral stalk is formed by the delta and b chains.

The protein resides in the cell membrane. Key component of the proton channel; it plays a direct role in the translocation of protons across the membrane. The sequence is that of ATP synthase subunit a from Bacillus sp. (strain PS3).